We begin with the raw amino-acid sequence, 559 residues long: Subtelomeric hrmA-associated cluster protein AFUB_079030 (559 aa).

4 disordered regions span residues 163 to 190, 298 to 351, 427 to 451, and 525 to 559; these read AKHPYNGGKPPAGAPPGKKGDPEKTKPE, RESN…TGMA, SITSSSPEQTSHHRQAPLPMQHSAS, and FRTGFLSHPCDPSQQAPHSSGCGHPDSWTQNRPHV. Over residues 169 to 179 the composition is skewed to low complexity; that stretch reads GGKPPAGAPPG. Basic and acidic residues-rich tracts occupy residues 180 to 189 and 300 to 325; these read KKGDPEKTKP and SNQKEKDGDSNVDPDQKHEQEDDNAR. Over residues 336-346 the composition is skewed to polar residues; that stretch reads NSTSPMSNSAE.

In terms of biological role, part of the subtelomeric hrmA-associated cluster (HAC) containing genes that alter the hyphal surface (such as reduced total chitin or increased beta-glucan exposure) and perturb inter-hyphal interactions within the developing biofilms, resulting in a loss of vertically aligned polarized growing filaments. Consequently, this hypoxia-typic morphotype (called H-MORPH) with altered biofilm architecture leads to increased hypoxia fitness, increased host inflammation, rapid disease progression, and mortality in a murine model of invasive aspergillosis. In Aspergillus fumigatus (strain CBS 144.89 / FGSC A1163 / CEA10) (Neosartorya fumigata), this protein is Subtelomeric hrmA-associated cluster protein AFUB_079030.